The chain runs to 232 residues: 2,3,4,5-tetrahydropyridine-2,6-dicarboxylate N-acetyltransferase (232 aa).

It belongs to the transferase hexapeptide repeat family. DapH subfamily.

The enzyme catalyses (S)-2,3,4,5-tetrahydrodipicolinate + acetyl-CoA + H2O = L-2-acetamido-6-oxoheptanedioate + CoA. The protein operates within amino-acid biosynthesis; L-lysine biosynthesis via DAP pathway; LL-2,6-diaminopimelate from (S)-tetrahydrodipicolinate (acetylase route): step 1/3. Its function is as follows. Catalyzes the transfer of an acetyl group from acetyl-CoA to tetrahydrodipicolinate. This is 2,3,4,5-tetrahydropyridine-2,6-dicarboxylate N-acetyltransferase from Streptococcus pneumoniae (strain CGSP14).